A 379-amino-acid chain; its full sequence is Oxysterol-binding protein-related protein 4C (379 aa).

The protein belongs to the OSBP family. As to expression, expressed in flowers.

In terms of biological role, may be involved in the transport of sterols. This is Oxysterol-binding protein-related protein 4C (ORP4C) from Arabidopsis thaliana (Mouse-ear cress).